The chain runs to 118 residues: Acidic phospholipase A2 PA-3 (118 aa).

7 cysteine pairs are disulfide-bonded: Cys-11-Cys-71, Cys-27-Cys-117, Cys-29-Cys-45, Cys-44-Cys-98, Cys-51-Cys-91, Cys-60-Cys-84, and Cys-78-Cys-89. Positions 28, 30, and 32 each coordinate Ca(2+). The active site involves His-48. Asp-49 serves as a coordination point for Ca(2+). Asp-92 is a catalytic residue.

This sequence belongs to the phospholipase A2 family. Group I subfamily. D49 sub-subfamily. Ca(2+) serves as cofactor. Expressed by the venom gland.

It localises to the secreted. It carries out the reaction a 1,2-diacyl-sn-glycero-3-phosphocholine + H2O = a 1-acyl-sn-glycero-3-phosphocholine + a fatty acid + H(+). Functionally, PLA2 catalyzes the calcium-dependent hydrolysis of the 2-acyl groups in 3-sn-phosphoglycerides. The protein is Acidic phospholipase A2 PA-3 of Pseudechis australis (Mulga snake).